The sequence spans 376 residues: uncharacterized protein (376 aa).

This sequence belongs to the glycosyltransferase 28 family.

This is an uncharacterized protein from Methanosarcina mazei (strain ATCC BAA-159 / DSM 3647 / Goe1 / Go1 / JCM 11833 / OCM 88) (Methanosarcina frisia).